A 104-amino-acid polypeptide reads, in one-letter code: L-rhamnose mutarotase (104 aa).

Residue Tyr-18 participates in substrate binding. His-22 serves as the catalytic Proton donor. Residues Tyr-41 and 76–77 (WW) contribute to the substrate site.

It belongs to the rhamnose mutarotase family. As to quaternary structure, homodimer.

Its subcellular location is the cytoplasm. It catalyses the reaction alpha-L-rhamnose = beta-L-rhamnose. It participates in carbohydrate metabolism; L-rhamnose metabolism. Functionally, involved in the anomeric conversion of L-rhamnose. In Burkholderia cenocepacia (strain HI2424), this protein is L-rhamnose mutarotase.